The chain runs to 146 residues: Large ribosomal subunit protein uL15 (146 aa).

Residues 1–58 (MNLSNLRAPKKANRNRKRVGRGMGSGHGKTSTRGHKGQRSRSGSRSMRGFEGGQMPLH) are disordered. 2 stretches are compositionally biased toward basic residues: residues 8 to 20 (APKK…KRVG) and 30 to 39 (TSTRGHKGQR). Residues 40-49 (SRSGSRSMRG) show a composition bias toward low complexity.

Belongs to the universal ribosomal protein uL15 family. As to quaternary structure, part of the 50S ribosomal subunit.

In terms of biological role, binds to the 23S rRNA. The chain is Large ribosomal subunit protein uL15 from Acidobacterium capsulatum (strain ATCC 51196 / DSM 11244 / BCRC 80197 / JCM 7670 / NBRC 15755 / NCIMB 13165 / 161).